The following is a 362-amino-acid chain: Mitochondrial distribution and morphology protein 12 (362 aa).

The SMP-LTD domain maps to M1–S361. Disordered regions lie at residues D65–P141 and T170–G207. Polar residues-rich tracts occupy residues V106–A119 and T170–G187. Low complexity predominate over residues P192–S201.

Belongs to the MDM12 family. Component of the ER-mitochondria encounter structure (ERMES) or MDM complex, composed of MMM1, MDM10, MDM12 and MDM34. An MMM1 homodimer associates with one molecule of MDM12 on each side in a pairwise head-to-tail manner, and the SMP-LTD domains of MMM1 and MDM12 generate a continuous hydrophobic tunnel for phospholipid trafficking.

Its subcellular location is the mitochondrion outer membrane. The protein localises to the endoplasmic reticulum membrane. In terms of biological role, component of the ERMES/MDM complex, which serves as a molecular tether to connect the endoplasmic reticulum (ER) and mitochondria. Components of this complex are involved in the control of mitochondrial shape and protein biogenesis, and function in nonvesicular lipid trafficking between the ER and mitochondria. MDM12 is required for the interaction of the ER-resident membrane protein MMM1 and the outer mitochondrial membrane-resident beta-barrel protein MDM10. The MDM12-MMM1 subcomplex functions in the major beta-barrel assembly pathway that is responsible for biogenesis of all mitochondrial outer membrane beta-barrel proteins, and acts in a late step after the SAM complex. The MDM10-MDM12-MMM1 subcomplex further acts in the TOM40-specific pathway after the action of the MDM12-MMM1 complex. Essential for establishing and maintaining the structure of mitochondria and maintenance of mtDNA nucleoids. In Meyerozyma guilliermondii (strain ATCC 6260 / CBS 566 / DSM 6381 / JCM 1539 / NBRC 10279 / NRRL Y-324) (Yeast), this protein is Mitochondrial distribution and morphology protein 12.